Consider the following 672-residue polypeptide: MNVLSSICYGGDYNPEQWPEEIWYEDAKLMQKAGVNLVSLGIFSWSKIEPSDGVFDFEWLDKVIDILYDHGVYINLGTATATTPAWFVKKYPDSLPIDESGVILSFGSRQHYCPNHPQLITHIKRLVRAIAERYKNHPALKMWHVNNEYACHVSKCFCENCAVAFRKWLKERYKTIDELNERWGTNFWGQRYNHWDEINPPRKAPTFINPSQELDYYRFMNDSILKLFLTEKEILREVTPDIPVSTNFMGSFKPLNYFQWAQHVDIVTWDSYPDPREGLPIQHAMMNDLMRSLRKGQPFILMEQVTSHVNWRDINVPKPPGVMRLWSYATIARGADGIMFFQWRQSRAGAEKFHGAMVPHFLNENNRIYREVTQLGQELKKLDCLVGSRIKAEVAIIFDWENWWAVELSSKPHNKLRYIPIVEAYYRELYKRNIAVDFVRPSDDLTKYKVVIAPMLYMVKEGEDENLRQFVANGGTLIVSFFSGIVDENDRVHLGGYPGPLRDILGIFVEEFVPYPETKVNKIYSNDGEYDCTTWADIIRLEGAEPLATFKGDWYAGLPAVTRNCYGKGEGIYVGTYPDSNYLGRLLEQVFAKHHINPILEVAENVEVQQRETDEWKYLIIINHNDYEVTLSLPEDKIYQNMIDGKCFRGGELRIQGVDVAVLREHDEAGKV.

Arg-109 contributes to the substrate binding site. Cys-113 lines the Zn(2+) pocket. Asn-147 lines the substrate pocket. Residue Glu-148 is the Proton donor of the active site. Positions 156, 158, and 161 each coordinate Zn(2+). The Nucleophile role is filled by Glu-303. Residues Trp-311 and 351–354 each bind substrate; that span reads EKFH.

It belongs to the glycosyl hydrolase 42 family.

It catalyses the reaction Hydrolysis of terminal non-reducing beta-D-galactose residues in beta-D-galactosides.. Its activity is regulated as follows. By divalent metal ions. Fe(2+), Zn(2+), Cu(2+), Pb(2+) and Sn(2+) inhibit 52, 76.6, 85.3, 100 and 100% of the enzyme activity, respectively. Other metal cations and EDTA do not inhibit this enzyme. Thiol reagents 2-mercaptoethanol and dithiothreitol have no effect on the activity. Sulfhydryl group-blocking reagents p-chloromercuribenzoic acid and iodoacetic acid inhibit 86.2 and 74% of the enzyme activity, respectively. Hydrolyzes 6-bromo-2-naphthyl-beta-D-galactopyranoside and o-nitrophenyl-beta-D-galactopyranoside (ONPG). Possesses a high level of transgalactosylation activity. Hydrolyzes lactose in milk. This chain is Beta-galactosidase bgaB (bgaB), found in Geobacillus kaustophilus.